Reading from the N-terminus, the 416-residue chain is MIFKFSQKALVALCLVVGLAEAVPSKSRVVSRASTFDYNGIVRGVNIGGWLVLEPWITPSIFDNAGDAAVDEWTLTATLGQDQAKAVLSQHWSTFITQGDFHRIAQAGMNHVRIPIGYWAVSSLPDEPYVDGQLEYLDNAISWARDAGLKVVIDLHGAPGSQNGFDNSGRKGPIAWQQGNTVSQTVDAFRALAERYLPQSDVVAAIEALNEPNIPGGVSEAGLRDYYDQIADVVRQINPDTSVFLSDGFLSTASWNGFKTGEDVVMDTHHYEMFDNYLISLDIHGHVKSACDFGKQIKGSDKPVVVGEWSGAVTDCTKYLNGKGVPTRYQGEYANNPKYGDCGDKTQGSVADLSDQERADTRRFIEAQLDAYEGKNGWLFWTWKTEGAPGWDMQDLLANGVFPSPLTDRQFPNQCA.

Residues 1–22 (MIFKFSQKALVALCLVVGLAEA) form the signal peptide. The Proton donor role is filled by glutamate 211. Cystine bridges form between cysteine 291/cysteine 415 and cysteine 316/cysteine 342. Glutamate 308 (nucleophile) is an active-site residue.

It belongs to the glycosyl hydrolase 5 (cellulase A) family. In terms of assembly, monomer. The cofactor is Mn(2+).

The protein resides in the secreted. The catalysed reaction is Successive hydrolysis of beta-D-glucose units from the non-reducing ends of (1-&gt;3)-beta-D-glucans, releasing alpha-glucose.. Beta-glucanases participate in the metabolism of beta-glucan, the main structural component of the cell wall. It could also function biosynthetically as a transglycosylase. The sequence is that of Probable glucan 1,3-beta-glucosidase A (exgA) from Neosartorya fischeri (strain ATCC 1020 / DSM 3700 / CBS 544.65 / FGSC A1164 / JCM 1740 / NRRL 181 / WB 181) (Aspergillus fischerianus).